A 494-amino-acid chain; its full sequence is MAARYTEAVLAALGVLSVCSASSSSGSGASGKAGGEAEWAEPWDGAVFRPPAALGAVGMTRGLGSPPPGNAETVDLPVLLWWSPGLFPHFPGDSERIECALGACVASRDRRARADPRTRALLFYGTDFRAADAPLPRLAHQSWALLHEESPLNNFLLSHGPGIRLFNLTATFSRHSDYPLPLQWLPGAAYLRRPAPPLRERAEWRRRGYAPLLYLQSHCDVPSDRDRYVRELMRYIPVDSYGKCLQNREPPTVRLQDTATATTEDPELMAFLSRYKFHLAMENAICNDYMTEKLWRPMHLGAVPVYRGSPSVRDWMPNNHSVILIDDFESPQKLAEFIDFLDKNDEEYMKYLAYKQPGGITNQFLLDNLEHREWGVNDPMLPNYLNGFECFVCDHELARLDAEKAHESSPRDIPVLEPHIAQLSHMDCPVPTPGFGKVEEIPENDSWKEMWLQDYWQGLYQGEALTAMIHNNETQQSKFWDYVHEIFMKRNKNL.

At 1-7 the chain is on the cytoplasmic side; it reads MAARYTE. Residues 8 to 24 traverse the membrane as a helical; Signal-anchor for type II membrane protein segment; the sequence is AVLAALGVLSVCSASSS. Residues 25–494 are Lumenal-facing; the sequence is SGSGASGKAG…EIFMKRNKNL (470 aa). A glycan (N-linked (GlcNAc...) asparagine) is linked at N167. C390 and C393 are joined by a disulfide.

Belongs to the glycosyltransferase 10 family.

The protein localises to the endoplasmic reticulum membrane. The catalysed reaction is L-threonyl-[protein] + GDP-beta-L-fucose = 3-O-(alpha-L-fucosyl)-L-threonyl-[protein] + GDP + H(+). The enzyme catalyses L-seryl-[protein] + GDP-beta-L-fucose = 3-O-(alpha-L-fucosyl)-L-seryl-[protein] + GDP + H(+). It functions in the pathway protein modification; protein glycosylation. Functionally, protein O-fucosyltransferase that specifically catalyzes O-fucosylation of serine or threonine residues in EMI domains of target proteins, such as MMRN1, MMRN2 and EMID1. Attaches fucose through an O-glycosidic linkage. O-fucosylation of EMI domain-containing proteins may be required for facilitating protein folding and secretion. Also shows minor alpha-(1,3)-fucosyltransferase activity toward activity toward biantennary N-glycan acceptors. However, this was tested with a library of synthetic substrates and this activity is unsure in vivo. The sequence is that of GDP-fucose protein O-fucosyltransferase 4 (Fut11) from Rattus norvegicus (Rat).